The primary structure comprises 181 residues: TATA-box-binding protein (181 aa).

Tandem repeats lie at residues 7–83 (IVNV…IKEL) and 98–173 (VQNM…SATL).

It belongs to the TBP family.

Functionally, general factor that plays a role in the activation of archaeal genes transcribed by RNA polymerase. Binds specifically to the TATA box promoter element which lies close to the position of transcription initiation. The protein is TATA-box-binding protein of Methanococcus vannielii (strain ATCC 35089 / DSM 1224 / JCM 13029 / OCM 148 / SB).